Here is a 441-residue protein sequence, read N- to C-terminus: MSNILDIKILRVSSMIDKKILFEEVILDNLEIAKKAKVINRDIEIKLIPNKIKVIYGVRRGGKTYFLFQIINKHFKDDFIYINFEDERLINIALDELNELLKIALSIKNTKNLFFDEIQSVDNWDKFVRRLNDSGFNIFITGSSSKLLSKEIATSLRGRNLKTEILPLNFKEFLKFKNFNVKKRYSTIEKAELLKYLNEFIKFGGFPEITLIDDENIKKEILKEYLDGIFYRDVVERHSIRNIKEIKVLRNILINLFANEISIKKIANLLKEFNTKISRECIYNYLEYFSDAYLIFLLNNFSYKTKTISYSKLYVIDGMWNFSLSFSKNKGRILENLVFLELRRRGFVENENLFYVKRKNYEVDFLIFGENKELIQVCYELNETNKEREIKAYEKAIKDLKLDNVNLKIITYNDEGFEKITVDDKEHLIEIVPFWKWSLTY.

Residue 57-64 participates in ATP binding; sequence GVRRGGKT.

This is an uncharacterized protein from Methanocaldococcus jannaschii (strain ATCC 43067 / DSM 2661 / JAL-1 / JCM 10045 / NBRC 100440) (Methanococcus jannaschii).